The chain runs to 325 residues: 5-dehydro-2-deoxygluconokinase (325 aa).

It belongs to the carbohydrate kinase PfkB family.

The enzyme catalyses 5-dehydro-2-deoxy-D-gluconate + ATP = 6-phospho-5-dehydro-2-deoxy-D-gluconate + ADP + H(+). Its pathway is polyol metabolism; myo-inositol degradation into acetyl-CoA; acetyl-CoA from myo-inositol: step 5/7. In terms of biological role, catalyzes the phosphorylation of 5-dehydro-2-deoxy-D-gluconate (2-deoxy-5-keto-D-gluconate or DKG) to 6-phospho-5-dehydro-2-deoxy-D-gluconate (DKGP). The polypeptide is 5-dehydro-2-deoxygluconokinase (Bacillus licheniformis (strain ATCC 14580 / DSM 13 / JCM 2505 / CCUG 7422 / NBRC 12200 / NCIMB 9375 / NCTC 10341 / NRRL NRS-1264 / Gibson 46)).